We begin with the raw amino-acid sequence, 379 residues long: L-lactate dehydrogenase (379 aa).

The 379-residue stretch at 1 to 379 (MIISSSTDYR…ISPDSLVRGL (379 aa)) folds into the FMN hydroxy acid dehydrogenase domain. Tyr24 is a substrate binding site. Ser106 and Gln127 together coordinate FMN. Substrate is bound at residue Tyr129. Thr155 is a binding site for FMN. Arg164 provides a ligand contact to substrate. Lys251 contacts FMN. Residue His275 is the Proton acceptor of the active site. Arg278 is a binding site for substrate. 306–330 (DSGIRSGLDVVRMIAQGADGVLIGR) contacts FMN.

The protein belongs to the FMN-dependent alpha-hydroxy acid dehydrogenase family. It depends on FMN as a cofactor.

Its subcellular location is the cell inner membrane. It carries out the reaction (S)-lactate + A = pyruvate + AH2. Functionally, catalyzes the conversion of L-lactate to pyruvate. Is coupled to the respiratory chain. This is L-lactate dehydrogenase from Allorhizobium ampelinum (strain ATCC BAA-846 / DSM 112012 / S4) (Agrobacterium vitis (strain S4)).